Consider the following 1283-residue polypeptide: uncharacterized protein (1283 aa).

The region spanning A10–T46 is the LDL-receptor class A domain. 2 disulfides stabilise this stretch: C11/C23 and C18/C36. Residues D27 to G47 form a disordered region. A compositionally biased stretch (acidic residues) spans K34–V45. An N-linked (GlcNAc...) asparagine glycan is attached at N79. Residues S236–V278 are disordered. A compositionally biased stretch (low complexity) spans T261–T272. The stretch at Y332–L389 forms a coiled coil. Disordered stretches follow at residues A621 to S651 and S1005 to G1046. The segment covering V626–P647 has biased composition (pro residues). The span at S1005–E1015 shows a compositional bias: low complexity. Residues S1016–T1026 are compositionally biased toward acidic residues. Low complexity predominate over residues E1027–T1044. The helical transmembrane segment at V1263–F1283 threads the bilayer.

The protein resides in the membrane. This is an uncharacterized protein from Caenorhabditis elegans.